Reading from the N-terminus, the 716-residue chain is Splicing factor Cactin (716 aa).

The disordered stretch occupies residues 1 to 104 (MGSHGKGKRD…SKKAQKKALR (104 aa)). A compositionally biased stretch (basic and acidic residues) spans 10–22 (DRSGRQKKRRDES). A compositionally biased stretch (low complexity) spans 25-45 (GSESESYTSDSDGSDDLSPPR). Positions 46–61 (SSRRKKGSSSRRTRRR) are enriched in basic residues. Over residues 81 to 95 (SSKDYSEEKVTEYMS) the composition is skewed to basic and acidic residues. Positions 153-201 (SVKAEKRRHRERMTEVEKVKKRREERAVEKARHEEEMALLARERARAEF) form a coiled coil. S450 is modified (phosphoserine). Positions 466-525 (VEENEEEINDTNLSDAEEAFSPEPVAEEEEADEAAEAAGSFSPELMHGDDREEAIDPEED) are disordered. A compositionally biased stretch (acidic residues) spans 468 to 500 (ENEEEINDTNLSDAEEAFSPEPVAEEEEADEAA).

The protein belongs to the CACTIN family. Interacts with At5g63440.

The protein localises to the nucleus speckle. Its function is as follows. Plays a role in pre-mRNA splicing by facilitating excision of a subset of introns. Required for embryogenesis. The protein is Splicing factor Cactin (CTN) of Arabidopsis thaliana (Mouse-ear cress).